An 890-amino-acid chain; its full sequence is Alanine--tRNA ligase (890 aa).

Zn(2+)-binding residues include His572, His576, Cys674, and His678.

It belongs to the class-II aminoacyl-tRNA synthetase family. Zn(2+) is required as a cofactor.

Its subcellular location is the cytoplasm. It carries out the reaction tRNA(Ala) + L-alanine + ATP = L-alanyl-tRNA(Ala) + AMP + diphosphate. Functionally, catalyzes the attachment of alanine to tRNA(Ala) in a two-step reaction: alanine is first activated by ATP to form Ala-AMP and then transferred to the acceptor end of tRNA(Ala). Also edits incorrectly charged Ser-tRNA(Ala) and Gly-tRNA(Ala) via its editing domain. This is Alanine--tRNA ligase from Prochlorococcus marinus (strain MIT 9211).